Here is a 144-residue protein sequence, read N- to C-terminus: Maximins 6/H10 (144 aa).

An N-terminal signal peptide occupies residues 1–18; the sequence is MNFKYIVAVSFLIASAYA. A propeptide spanning residues 19-43 is cleaved from the precursor; that stretch reads RSVKNDEQSLSQRDVLDEESLREIR. Asn-70 carries the post-translational modification Asparagine amide. The propeptide occupies 74-123; sequence TAEDHEVMKRLEAVMRDLDSLDHPEEASERETRGFNQEEIANRFTKKEKR. Position 143 is a leucine amide (Leu-143).

It belongs to the bombinin family. As to expression, expressed by the skin glands.

The protein localises to the secreted. Maximin-6 shows antimicrobial activity against bacteria and against the fungus C.albicans. It has little hemolytic activity. Functionally, maximin-H10 shows antimicrobial activity against bacteria and against the fungus C.albicans. Shows strong hemolytic activity. The polypeptide is Maximins 6/H10 (Bombina maxima (Giant fire-bellied toad)).